Consider the following 992-residue polypeptide: GYF domain-containing protein mpd2 (992 aa).

3 disordered regions span residues 24–105, 172–245, and 289–316; these read ANNS…SANP, GTAS…NVAS, and FSQS…MSIR. 2 stretches are compositionally biased toward polar residues: residues 25–58 and 75–104; these read NNSS…SSHI and KSGN…SSAN. At S175 the chain carries Phosphoserine. Residues 193 to 205 are compositionally biased toward low complexity; the sequence is SPSSFSQSRSAVS. Polar residues-rich tracts occupy residues 214-237 and 301-315; these read TLQQ…SNQP and FPTN…SMSI. The residue at position 318 (T318) is a Phosphothreonine. S320 is modified (phosphoserine). Residues 336–359 form a disordered region; that stretch reads KENASQPVAPSASQREHSAVNSPA. Over residues 337–348 the composition is skewed to polar residues; that stretch reads ENASQPVAPSAS. Residues 386–434 form the GYF domain; that stretch reads LLHWLYKDPQNNVQGPFTGVDMHQWYRAGYFPLGLPIKRLEEEEYYSLA. Disordered stretches follow at residues 467–486, 496–563, 576–637, 651–682, 697–729, 760–794, 818–859, and 940–992; these read DLPL…GGNK, EVSN…NESL, SEET…HLPS, SEAL…WAKV, EKQN…LASG, AELA…PSSN, VGPG…SSKL, and TGKD…KKRV. Composition is skewed to polar residues over residues 474–483 and 507–532; these read LPESSEQNRG and ANSL…NEDS. Residue S509 is modified to Phosphoserine. 2 stretches are compositionally biased toward basic and acidic residues: residues 549-561 and 577-595; these read MYEK…HHNE and EETK…ESKR. The span at 596–606 shows a compositional bias: polar residues; it reads LSTGVQKQSPA. Residues S604 and S637 each carry the phosphoserine modification. 2 stretches are compositionally biased toward polar residues: residues 658 to 676 and 707 to 721; these read EKSN…SKTG and VASN…NAKA. Phosphoserine occurs at positions 775, 829, 838, and 840. Polar residues-rich tracts occupy residues 825–859 and 943–966; these read VNQQ…SSKL and DGQQ…SQVV.

The protein belongs to the SMY2/mpd2 family.

The protein resides in the cytoplasm. Functionally, has a role in mRNA export from the nucleus. This chain is GYF domain-containing protein mpd2 (mpd2), found in Schizosaccharomyces pombe (strain 972 / ATCC 24843) (Fission yeast).